Here is a 366-residue protein sequence, read N- to C-terminus: Quinolinate synthase (366 aa).

The iminosuccinate site is built by His-44 and Ser-61. Cys-108 contributes to the [4Fe-4S] cluster binding site. Iminosuccinate is bound by residues 139–141 (YVN) and Ser-160. Residue Cys-228 participates in [4Fe-4S] cluster binding. Residues 254–256 (HPE) and Thr-271 each bind iminosuccinate. Cys-318 provides a ligand contact to [4Fe-4S] cluster.

The protein belongs to the quinolinate synthase family. Type 3 subfamily. [4Fe-4S] cluster is required as a cofactor.

The protein resides in the cytoplasm. It catalyses the reaction iminosuccinate + dihydroxyacetone phosphate = quinolinate + phosphate + 2 H2O + H(+). It participates in cofactor biosynthesis; NAD(+) biosynthesis; quinolinate from iminoaspartate: step 1/1. Catalyzes the condensation of iminoaspartate with dihydroxyacetone phosphate to form quinolinate. In Staphylococcus carnosus (strain TM300), this protein is Quinolinate synthase.